We begin with the raw amino-acid sequence, 383 residues long: Putative glutamate--cysteine ligase 2-1 (383 aa).

Belongs to the glutamate--cysteine ligase type 2 family. YbdK subfamily.

The enzyme catalyses L-cysteine + L-glutamate + ATP = gamma-L-glutamyl-L-cysteine + ADP + phosphate + H(+). Its function is as follows. ATP-dependent carboxylate-amine ligase which exhibits weak glutamate--cysteine ligase activity. In Legionella pneumophila (strain Corby), this protein is Putative glutamate--cysteine ligase 2-1.